The sequence spans 73 residues: Large ribosomal subunit protein uL29 (73 aa).

Belongs to the universal ribosomal protein uL29 family.

This Aquifex aeolicus (strain VF5) protein is Large ribosomal subunit protein uL29 (rpmC).